The chain runs to 201 residues: ATP-dependent Clp protease proteolytic subunit (201 aa).

The active-site Nucleophile is the Ser97. Residue His122 is part of the active site.

The protein belongs to the peptidase S14 family. In terms of assembly, fourteen ClpP subunits assemble into 2 heptameric rings which stack back to back to give a disk-like structure with a central cavity, resembling the structure of eukaryotic proteasomes.

It localises to the cytoplasm. The catalysed reaction is Hydrolysis of proteins to small peptides in the presence of ATP and magnesium. alpha-casein is the usual test substrate. In the absence of ATP, only oligopeptides shorter than five residues are hydrolyzed (such as succinyl-Leu-Tyr-|-NHMec, and Leu-Tyr-Leu-|-Tyr-Trp, in which cleavage of the -Tyr-|-Leu- and -Tyr-|-Trp bonds also occurs).. In terms of biological role, cleaves peptides in various proteins in a process that requires ATP hydrolysis. Has a chymotrypsin-like activity. Plays a major role in the degradation of misfolded proteins. This is ATP-dependent Clp protease proteolytic subunit from Nitratidesulfovibrio vulgaris (strain ATCC 29579 / DSM 644 / CCUG 34227 / NCIMB 8303 / VKM B-1760 / Hildenborough) (Desulfovibrio vulgaris).